The following is a 535-amino-acid chain: High affinity immunoglobulin alpha and immunoglobulin mu Fc receptor (535 aa).

Residues 1 to 35 (MDQGAPAKPSEQKVPSLRTRWEILLLTLCLLHGSS) form the signal peptide. The Extracellular portion of the chain corresponds to 36–455 (MTPPHRRSHS…ALMEGESHTR (420 aa)). Residues 95-117 (GGAVTIHCHYAPSSVNRHQRKYW) form a mediates immunoglobulin Fc fragment-binding region. Residues 95–189 (GGAVTIHCHY…DMLFFSVNLT (95 aa)) enclose the Ig-like V-type domain. A disulfide bridge connects residues cysteine 102 and cysteine 173. The N-linked (GlcNAc...) asparagine glycan is linked to asparagine 187. Disordered regions lie at residues 201–360 (AAPA…LISE) and 405–430 (EGRS…QLSV). Low complexity-rich tracts occupy residues 208 to 220 (PTTA…SSAG) and 241 to 253 (TVPT…TTSS). A compositionally biased stretch (polar residues) spans 291–328 (KSRSMSSTTQGVWLWSTRNSVTPSVTTSEGRRQGTTPE). The segment covering 330–346 (DGPRDETDVRVSPEAPR) has biased composition (basic and acidic residues). Over residues 413-429 (LENTTEESSPPTPSQLS) the composition is skewed to polar residues. A helical membrane pass occupies residues 456–476 (ILTPVSTVLALLLIAALILLK). Over 477–535 (RSLGRQRTSQKKERVPRITLIQMTHFLPDKLPDEGKNFQQSNLLPPQASLTVLENDPRP) the chain is Cytoplasmic. The interval 507 to 535 (LPDEGKNFQQSNLLPPQASLTVLENDPRP) is disordered. Positions 513–528 (NFQQSNLLPPQASLTV) are enriched in polar residues.

Interacts with IGHM; this interaction facilitates the endocytosis of IgM-coated microbes and IgM-antigen immune complexes. N-glycosylated. Expressed in several tissues including thymus, spleen, liver, kidney, small and large intestine, testis and placenta. Expressed by oligodendrocytes, B-cells and macrophages but not granulocytes, T-cells or NK cells (at protein level).

It is found in the cell membrane. Its function is as follows. Functions as a receptor for the Fc fragment of IgA and IgM. Binds IgA and IgM with high affinity and mediates their endocytosis. May function in the immune response to microbes mediated by IgA and IgM. The protein is High affinity immunoglobulin alpha and immunoglobulin mu Fc receptor (Fcamr) of Mus musculus (Mouse).